Consider the following 596-residue polypeptide: Elongation factor 4 (596 aa).

A tr-type G domain is found at 2-183; it reads KNIRNFSIIA…AIITRIPAPN (182 aa). Residues 14 to 19 and 130 to 133 contribute to the GTP site; these read DHGKST and NKID.

This sequence belongs to the TRAFAC class translation factor GTPase superfamily. Classic translation factor GTPase family. LepA subfamily.

It is found in the cell inner membrane. It catalyses the reaction GTP + H2O = GDP + phosphate + H(+). In terms of biological role, required for accurate and efficient protein synthesis under certain stress conditions. May act as a fidelity factor of the translation reaction, by catalyzing a one-codon backward translocation of tRNAs on improperly translocated ribosomes. Back-translocation proceeds from a post-translocation (POST) complex to a pre-translocation (PRE) complex, thus giving elongation factor G a second chance to translocate the tRNAs correctly. Binds to ribosomes in a GTP-dependent manner. The sequence is that of Elongation factor 4 from Campylobacter concisus (strain 13826).